The sequence spans 306 residues: Agmatinase (306 aa).

Positions 126, 149, 151, 153, 230, and 232 each coordinate Mn(2+).

This sequence belongs to the arginase family. Agmatinase subfamily. The cofactor is Mn(2+).

It carries out the reaction agmatine + H2O = urea + putrescine. Its pathway is amine and polyamine biosynthesis; putrescine biosynthesis via agmatine pathway; putrescine from agmatine: step 1/1. Functionally, catalyzes the formation of putrescine from agmatine. This Cronobacter sakazakii (strain ATCC BAA-894) (Enterobacter sakazakii) protein is Agmatinase.